The primary structure comprises 519 residues: Matrix metalloproteinase-B (519 aa).

The N-terminal stretch at 1–26 (MTKWSPNGNPLSTIYLILSLFTLAHT) is a signal peptide. Positions 27–126 (APTTQHSRTT…RQEQTKRTKR (100 aa)) are cleaved as a propeptide — activation peptide. Polar residues predominate over residues 29-39 (TTQHSRTTTQL). The segment at 29–50 (TTQHSRTTTQLRLEDEDGGGGV) is disordered. The Cysteine switch signature appears at 109-116 (PRCTQTDV). Zn(2+)-binding residues include C111, H208, D210, H232, H247, and H276. E277 is a catalytic residue. Residues H280 and H286 each coordinate Zn(2+). A glycan (N-linked (GlcNAc...) asparagine) is linked at N341. Basic and acidic residues predominate over residues 391-402 (KDKRSYRGDSKI). Residues 391 to 410 (KDKRSYRGDSKIPKCSSNNS) form a disordered region. N408 carries N-linked (GlcNAc...) asparagine glycosylation.

This sequence belongs to the peptidase M10A family. Zn(2+) is required as a cofactor. Expressed in spermatheca and spermathecal-uterine valve, weakly in vulva and anal muscles and in two cells in the head (probably RMEV and RMED motor neurons).

The protein resides in the secreted. It localises to the extracellular space. It is found in the extracellular matrix. Inhibited by human TIMP1 and TIMP2 and the broad MMP inhibitors BB94 (Batimastat) and CT543. In terms of biological role, metalloprotease involved in molting, a process during larval stages in which a new cuticle is formed and the old cuticle is shed. Plays a role in thermotolerance probably by preventing the accumulation of oxidized lipoproteins and cholesterol. This Caenorhabditis elegans protein is Matrix metalloproteinase-B.